We begin with the raw amino-acid sequence, 517 residues long: GMP synthase [glutamine-hydrolyzing] (517 aa).

The 191-residue stretch at 9–199 folds into the Glutamine amidotransferase type-1 domain; sequence RILILDFGSQ…VLNVCGCEGL (191 aa). C86 acts as the Nucleophile in catalysis. Catalysis depends on residues H173 and E175. One can recognise a GMPS ATP-PPase domain in the interval 200 to 392; sequence WTSASIIEDA…LGLPYNMLYR (193 aa). Residue 227-233 participates in ATP binding; that stretch reads SGGVDSS.

Homodimer.

The enzyme catalyses XMP + L-glutamine + ATP + H2O = GMP + L-glutamate + AMP + diphosphate + 2 H(+). It participates in purine metabolism; GMP biosynthesis; GMP from XMP (L-Gln route): step 1/1. Functionally, catalyzes the synthesis of GMP from XMP. This chain is GMP synthase [glutamine-hydrolyzing], found in Aliivibrio fischeri (strain ATCC 700601 / ES114) (Vibrio fischeri).